Consider the following 361-residue polypeptide: S-adenosylmethionine:tRNA ribosyltransferase-isomerase (361 aa).

Belongs to the QueA family. In terms of assembly, monomer.

It is found in the cytoplasm. The enzyme catalyses 7-aminomethyl-7-carbaguanosine(34) in tRNA + S-adenosyl-L-methionine = epoxyqueuosine(34) in tRNA + adenine + L-methionine + 2 H(+). It functions in the pathway tRNA modification; tRNA-queuosine biosynthesis. Transfers and isomerizes the ribose moiety from AdoMet to the 7-aminomethyl group of 7-deazaguanine (preQ1-tRNA) to give epoxyqueuosine (oQ-tRNA). The sequence is that of S-adenosylmethionine:tRNA ribosyltransferase-isomerase from Rhizobium johnstonii (strain DSM 114642 / LMG 32736 / 3841) (Rhizobium leguminosarum bv. viciae).